The primary structure comprises 175 residues: NADH-ubiquinone oxidoreductase chain 6 (175 aa).

5 helical membrane-spanning segments follow: residues 1–21 (MMTY…VGFS), 27–47 (VYGG…VMNF), 49–69 (GSFL…VVFG), 88–108 (VVLG…LYVL), and 149–169 (YGVW…VVIM).

Belongs to the complex I subunit 6 family. As to quaternary structure, core subunit of respiratory chain NADH dehydrogenase (Complex I) which is composed of 45 different subunits.

It localises to the mitochondrion inner membrane. It carries out the reaction a ubiquinone + NADH + 5 H(+)(in) = a ubiquinol + NAD(+) + 4 H(+)(out). Functionally, core subunit of the mitochondrial membrane respiratory chain NADH dehydrogenase (Complex I) which catalyzes electron transfer from NADH through the respiratory chain, using ubiquinone as an electron acceptor. Essential for the catalytic activity and assembly of complex I. This chain is NADH-ubiquinone oxidoreductase chain 6 (MT-ND6), found in Pteropus dasymallus (Ryukyu flying fox).